The primary structure comprises 535 residues: ATP-dependent RNA helicase DBP3 (535 aa).

A compositionally biased stretch (basic and acidic residues) spans 1–21; sequence MGSSSKSEKRKYDDGEELLER. The interval 1–96 is disordered; the sequence is MGSSSKSEKR…TSYGYVQSSK (96 aa). A compositionally biased stretch (basic residues) spans 35–54; the sequence is KKDKKEKKDKKEKKDKKEKK. The segment covering 55-72 has biased composition (basic and acidic residues); it reads DKKEKNKESKEAEARDDS. Over residues 79 to 88 the composition is skewed to low complexity; that stretch reads SSSSSTESTS. The Q motif motif lies at 128-154; that stretch reads LSFDQIKLQKDVSSKLTKFPKPTPIQS. A Helicase ATP-binding domain is found at 157–329; the sequence is WPFLLDGKDV…NNFMNQPVKV (173 aa). An ATP-binding site is contributed by 170–177; the sequence is AETGSGKT. Positions 276 to 279 match the DEAD box motif; the sequence is DEAD. The region spanning 362 to 508 is the Helicase C-terminal domain; that stretch reads NLLQKYQNTG…PVPEALLKYG (147 aa).

Belongs to the DEAD box helicase family. DDX5/DBP2 subfamily.

The protein localises to the nucleus. Its subcellular location is the nucleolus. It catalyses the reaction ATP + H2O = ADP + phosphate + H(+). In terms of biological role, ATP-dependent RNA helicase required for 60S ribosomal subunit synthesis. Involved in efficient pre-rRNA processing, predominantly at site A3, which is necessary for the normal formation of 25S and 5.8S rRNAs. This chain is ATP-dependent RNA helicase DBP3 (DBP3), found in Lodderomyces elongisporus (strain ATCC 11503 / CBS 2605 / JCM 1781 / NBRC 1676 / NRRL YB-4239) (Yeast).